Consider the following 98-residue polypeptide: Small ribosomal subunit protein bS18c (98 aa).

Positions 1–13 (MSKQSFDFKRYKP) are enriched in basic and acidic residues. Residues 1–26 (MSKQSFDFKRYKPEAPSGSRKRPLKK) are disordered.

Belongs to the bacterial ribosomal protein bS18 family. Part of the 30S ribosomal subunit.

Its subcellular location is the plastid. It localises to the chloroplast. In Gnetum parvifolium (Small-leaved jointfir), this protein is Small ribosomal subunit protein bS18c.